A 193-amino-acid chain; its full sequence is Auxin-responsive protein IAA23 (193 aa).

Positions 1 to 12 (MSTSSGADSSPP) are enriched in polar residues. The tract at residues 1–66 (MSTSSGADSS…SPKARAVGWP (66 aa)) is disordered. The segment covering 21 to 36 (TALTLALPGSSSSSSS) has biased composition (low complexity). The EAR-like (transcriptional repression) signature appears at 23 to 27 (LTLAL). The span at 39 to 53 (DPERKRAAHADHADA) shows a compositional bias: basic and acidic residues. A PB1 domain is found at 83–191 (AKLVKVAVDG…EAVNLSPRRS (109 aa)).

It belongs to the Aux/IAA family. Homodimers and heterodimers. In terms of tissue distribution, highly expressed in roots. Expressed in seedlings.

Its subcellular location is the nucleus. In terms of biological role, aux/IAA proteins are short-lived transcriptional factors that function as repressors of early auxin response genes at low auxin concentrations. The protein is Auxin-responsive protein IAA23 (IAA23) of Oryza sativa subsp. japonica (Rice).